The sequence spans 237 residues: Cell division cycle-associated protein 4 (237 aa).

One can recognise an SERTA domain in the interval 26–73 (YSLQRQSLLDMSLVKLQLCHMLVEPNLCRSVLIANTVRQIQEEMSQDG).

Expressed preferentially in hematopoietic progenitors and mature blood cells. Expressed at low levels in the heart, lung, spleen, and thymus and at a higher level in muscle.

Its subcellular location is the nucleus. In terms of biological role, may participate in the regulation of cell proliferation through the E2F/RB pathway. May be involved in molecular regulation of hematopoietic stem cells and progenitor cell lineage commitment and differentiation. This chain is Cell division cycle-associated protein 4 (Cdca4), found in Mus musculus (Mouse).